We begin with the raw amino-acid sequence, 186 residues long: UPF0461 protein C5orf24 homolog (186 aa).

Over residues 60 to 69 (NETHLQTSTS) the composition is skewed to polar residues. The disordered stretch occupies residues 60–140 (NETHLQTSTS…AAGYKVSPGR (81 aa)). The segment covering 78 to 92 (LKKKKNLGRSGKRGR) has biased composition (basic residues). The span at 94-107 (SGTTKSAGYRTSTG) shows a compositional bias: polar residues.

This sequence belongs to the UPF0461 family.

This chain is UPF0461 protein C5orf24 homolog, found in Xenopus tropicalis (Western clawed frog).